The following is a 217-amino-acid chain: Probable transaldolase (217 aa).

Residue Lys-83 is the Schiff-base intermediate with substrate of the active site.

The protein belongs to the transaldolase family. Type 3B subfamily.

Its subcellular location is the cytoplasm. The enzyme catalyses D-sedoheptulose 7-phosphate + D-glyceraldehyde 3-phosphate = D-erythrose 4-phosphate + beta-D-fructose 6-phosphate. It functions in the pathway carbohydrate degradation; pentose phosphate pathway; D-glyceraldehyde 3-phosphate and beta-D-fructose 6-phosphate from D-ribose 5-phosphate and D-xylulose 5-phosphate (non-oxidative stage): step 2/3. Transaldolase is important for the balance of metabolites in the pentose-phosphate pathway. This Clostridium botulinum (strain Hall / ATCC 3502 / NCTC 13319 / Type A) protein is Probable transaldolase.